A 398-amino-acid chain; its full sequence is MTPAWATEKPTALLVLADGTVIEGRGLGATGSAVAEVCFNTALTGYQEILTDPSYAGQIVTFTFPHIGNIGTNGEDIEDLNPAARAGAVGAVFKADVTNPSNYRAAGHLDQWLKKRGIVALSGIDTRALTALIREKGMPNAVIAHAPDGVFDLDDLKQRAAAWSGLIGLDLAKEVTSGQSSVWRETPWVWNEGFGEQAEPSLHVVAIDYGVKRNILRLLAGLGAKVTVVPANTGSEEILAMQPDGIFLSNGPGDPEATGDYAVPVIQDLLKTDIPVFGICLGHQMLALALGGRTAKMHQGHHGANHPVKDHTTGKVEIVSMNHGFAVDADSLPEGVEETHVSLFDGSNCGIALTGRPVFSVQHHPEASPGPQDSHYLFRRFVNLIREKRGEEQLAERV.

The interval 1 to 199 is CPSase; it reads MTPAWATEKP…WNEGFGEQAE (199 aa). Positions 54, 251, and 253 each coordinate L-glutamine. In terms of domain architecture, Glutamine amidotransferase type-1 spans 203–391; it reads HVVAIDYGVK…VNLIREKRGE (189 aa). The active-site Nucleophile is the C280. L-glutamine is bound by residues L281, Q284, N322, G324, and F325. Active-site residues include H364 and E366.

It belongs to the CarA family. Composed of two chains; the small (or glutamine) chain promotes the hydrolysis of glutamine to ammonia, which is used by the large (or ammonia) chain to synthesize carbamoyl phosphate. Tetramer of heterodimers (alpha,beta)4.

The enzyme catalyses hydrogencarbonate + L-glutamine + 2 ATP + H2O = carbamoyl phosphate + L-glutamate + 2 ADP + phosphate + 2 H(+). It carries out the reaction L-glutamine + H2O = L-glutamate + NH4(+). It functions in the pathway amino-acid biosynthesis; L-arginine biosynthesis; carbamoyl phosphate from bicarbonate: step 1/1. Its pathway is pyrimidine metabolism; UMP biosynthesis via de novo pathway; (S)-dihydroorotate from bicarbonate: step 1/3. Functionally, small subunit of the glutamine-dependent carbamoyl phosphate synthetase (CPSase). CPSase catalyzes the formation of carbamoyl phosphate from the ammonia moiety of glutamine, carbonate, and phosphate donated by ATP, constituting the first step of 2 biosynthetic pathways, one leading to arginine and/or urea and the other to pyrimidine nucleotides. The small subunit (glutamine amidotransferase) binds and cleaves glutamine to supply the large subunit with the substrate ammonia. The chain is Carbamoyl phosphate synthase small chain from Mesorhizobium japonicum (strain LMG 29417 / CECT 9101 / MAFF 303099) (Mesorhizobium loti (strain MAFF 303099)).